The sequence spans 492 residues: MQESRSKESTLSGDEDKDVHRFLDEFDDKCTCKLLKEMKETLEGLKKSHPNPTNLDEFYRLFERYLRTRHEKIVWEKIRSPKDRIVQYNEIPEPTEKSKELLRKLAILKLNGGLGTTMGCVGPKSAITIKDGKNFIDLVVKQIRYLNSKYKIDVPLILMNSFNTEGMTDKIIFRYDGIKKFSQSKFPRISSETLLPVSPSHGDKGMYPPGHGDLFYSMKNSGMLEELLEGGYEYLFVSNIDNLASTVDLKLLEYFATNELGFLMEVTDKTRADVKGGTLIEYKGALRLLEIAQVPSNKKSEFTSFKKFTIFNTNNLWINLKEMKKKLEEGFFDLDIIENKKALDDETVIQLETAIGSAIKYFPNSCGVVVPRSRFLPVKTCSDLFLVESNLFVEKNGTLQLHPSRVPETCPTVKLIGENFSKIEKYEKCFKGIPDILELEVLTVSGNVLFGKNVVLKGTVIILADEKSKICVPDGSVLEDNIIYGNLPIIDH.

UTP contacts are provided by residues 110–113, Lys-124, Gln-183, and Gly-210; that span reads LNGG. 112–113 contacts substrate; that stretch reads GG. Lys-124 contributes to the Mg(2+) binding site. Substrate-binding positions include His-211 and 239–241; that span reads NID. Residues Asp-241 and Lys-379 each coordinate UTP. A Mg(2+)-binding site is contributed by Asp-241. Lys-379 is a catalytic residue. Residues 441-492 are oligomerization; that stretch reads VLTVSGNVLFGKNVVLKGTVIILADEKSKICVPDGSVLEDNIIYGNLPIIDH.

This sequence belongs to the UDPGP type 1 family. In terms of assembly, homooctamer.

The enzyme catalyses alpha-D-glucose 1-phosphate + UTP + H(+) = UDP-alpha-D-glucose + diphosphate. Its function is as follows. Plays a central role as a glucosyl donor in cellular metabolic pathways. The sequence is that of UTP--glucose-1-phosphate uridylyltransferase (UGP1) from Encephalitozoon cuniculi (strain GB-M1) (Microsporidian parasite).